A 59-amino-acid chain; its full sequence is Conorfamide-Vc1 (59 aa).

The signal sequence occupies residues 1 to 19 (MSGRGFLLLALLLLVTVEA). Positions 20–25 (TKVEKK) are excised as a propeptide. A positively charged region crucial for activity against MRGPRX1 receptors region spans residues 32–39 (AWSGPRNR). Phe-43 is subject to Phenylalanine amide. Positions 45–59 (RRDMQSPLLSERLRL) are excised as a propeptide.

The protein belongs to the FARP (FMRFamide related peptide) family. Expressed by the venom duct.

The protein localises to the secreted. In terms of biological role, this peptide activates human and mouse sensory neuron-specific G-protein coupled receptors MRGPRX1. The activity on human receptors has been measured (EC(50)=1.8 uM). Compared with the agonist chloroquine (anti-malaria drug), it is 200-fold more potent. The peptide also causes an increase in cytosolic calcium in a specific subset of DRG neurons, and, in contrast to other Conus venom peptides, the peptide also affects a large fraction of the non-neuronal cells. In vivo, when intracranially injected into mice, it principally renders mice unable to move, and at very low doses, it causes hyperactivity. It also induces itch sensation, since intradermal cheek injection into humanized transgenic mouse (mouse MRGPRX1 replaced by human MRGPRX1) induces scratching. In vivo, when tested at high doses (10 uM) on zebrafish larvae, it induces a range of behavioral effects ranging from an early hypoactivity during the first hour of treatment to an increase in movement during the following hours when the larvae are submitted to strobe light phases. The chain is Conorfamide-Vc1 from Conus victoriae (Queen Victoria cone).